We begin with the raw amino-acid sequence, 216 residues long: Trimethylamine corrinoid protein 1 (216 aa).

Positions 1-92 (MASKEEIIAK…EMEKRKSETK (92 aa)) constitute a B12-binding N-terminal domain. Positions 94 to 216 (LGTVVIGTIE…VVSKVRAVLL (123 aa)) constitute a B12-binding domain. His-107 contacts methylcob(III)alamin.

It belongs to the methylamine corrinoid protein family. In terms of assembly, can form a complex with MttB.

Its pathway is one-carbon metabolism; methanogenesis from trimethylamine. In terms of biological role, acts probably as a methyl group carrier between MttB and either MtbA or MtaA. The protein is Trimethylamine corrinoid protein 1 (mttC1) of Methanosarcina acetivorans (strain ATCC 35395 / DSM 2834 / JCM 12185 / C2A).